We begin with the raw amino-acid sequence, 384 residues long: Lipid-A-disaccharide synthase (384 aa).

The protein belongs to the LpxB family.

The catalysed reaction is 2-N,3-O-bis[(3R)-3-hydroxytetradecanoyl]-alpha-D-glucosaminyl 1-phosphate + UDP-2-N,3-O-bis[(3R)-3-hydroxytetradecanoyl]-alpha-D-glucosamine = lipid A disaccharide (E. coli) + UDP + H(+). It carries out the reaction a lipid X + a UDP-2-N,3-O-bis[(3R)-3-hydroxyacyl]-alpha-D-glucosamine = a lipid A disaccharide + UDP + H(+). It participates in glycolipid biosynthesis; lipid IV(A) biosynthesis; lipid IV(A) from (3R)-3-hydroxytetradecanoyl-[acyl-carrier-protein] and UDP-N-acetyl-alpha-D-glucosamine: step 5/6. In terms of biological role, condensation of UDP-2,3-diacylglucosamine and 2,3-diacylglucosamine-1-phosphate to form lipid A disaccharide, a precursor of lipid A, a phosphorylated glycolipid that anchors the lipopolysaccharide to the outer membrane of the cell. This is Lipid-A-disaccharide synthase from Blochmanniella floridana.